The primary structure comprises 338 residues: Biotin synthase (338 aa).

Positions 59-284 constitute a Radical SAM core domain; sequence EEVEIEGIVS…RTTLRFAGGR (226 aa). 3 residues coordinate [4Fe-4S] cluster: C74, C78, and C81. C117, C209, and R279 together coordinate [2Fe-2S] cluster.

It belongs to the radical SAM superfamily. Biotin synthase family. Homodimer. It depends on [4Fe-4S] cluster as a cofactor. Requires [2Fe-2S] cluster as cofactor.

The enzyme catalyses (4R,5S)-dethiobiotin + (sulfur carrier)-SH + 2 reduced [2Fe-2S]-[ferredoxin] + 2 S-adenosyl-L-methionine = (sulfur carrier)-H + biotin + 2 5'-deoxyadenosine + 2 L-methionine + 2 oxidized [2Fe-2S]-[ferredoxin]. Its pathway is cofactor biosynthesis; biotin biosynthesis; biotin from 7,8-diaminononanoate: step 2/2. Functionally, catalyzes the conversion of dethiobiotin (DTB) to biotin by the insertion of a sulfur atom into dethiobiotin via a radical-based mechanism. This chain is Biotin synthase, found in Corynebacterium urealyticum (strain ATCC 43042 / DSM 7109).